The primary structure comprises 188 residues: Probable manganese efflux pump MntP (188 aa).

Helical transmembrane passes span 3–23 (ITAT…ASIG), 66–86 (LEWN…RMII), 106–128 (WLLV…GLAF), 143–163 (ATLI…SIIG), and 168–188 (ILGG…HFHG).

The protein belongs to the MntP (TC 9.B.29) family.

It is found in the cell inner membrane. Its function is as follows. Probably functions as a manganese efflux pump. The chain is Probable manganese efflux pump MntP from Escherichia coli O7:K1 (strain IAI39 / ExPEC).